Here is a 758-residue protein sequence, read N- to C-terminus: Deoxynucleotidyltransferase terminal-interacting protein 2 (758 aa).

A compositionally biased stretch (polar residues) spans 1–21 (MVVTRSGLSRTRLQESSQQKR). The disordered stretch occupies residues 1 to 176 (MVVTRSGLSR…SQSGTVSDAE (176 aa)). Residues S17, S133, S137, and S140 each carry the phosphoserine modification. Residues 128 to 143 (DEVVVSEAESHVSGVS) are compositionally biased toward low complexity. Polar residues predominate over residues 155-172 (NKANSQRDSSQESQSGTV). 2 positions are modified to phosphoserine: S173 and S183. A Glycyl lysine isopeptide (Lys-Gly) (interchain with G-Cter in SUMO2) cross-link involves residue K210. 4 positions are modified to phosphoserine: S229, S240, S248, and S255. Polar residues predominate over residues 231 to 255 (ATQLSARPLSQRNMPNVSDSETYNS). Disordered stretches follow at residues 231–277 (ATQL…HQNL), 312–353 (KVIN…QLSS), 377–480 (DKRG…AEDL), and 501–552 (DKNF…DLLS). Residue K317 forms a Glycyl lysine isopeptide (Lys-Gly) (interchain with G-Cter in SUMO2) linkage. Over residues 321–353 (RSLSEAQDTSLQQSVSQNHSSTPNKKPTFQLSS) the composition is skewed to polar residues. 2 positions are modified to phosphoserine: S324 and S330. Glycyl lysine isopeptide (Lys-Gly) (interchain with G-Cter in SUMO2) cross-links involve residues K345 and K384. Over residues 377-387 (DKRGGSGKKSD) the composition is skewed to basic and acidic residues. Over residues 431-440 (LSMTQDTTDS) the composition is skewed to polar residues. A compositionally biased stretch (low complexity) spans 447 to 456 (SSDESQQSDS). Residues S476 and S512 each carry the phosphoserine modification. Positions 512–541 (SEVAIEEEKEEEEKEEENSEEDSSDSDENK) form a coiled coil. Acidic residues predominate over residues 515-550 (AIEEEKEEEEKEEENSEEDSSDSDENKDESSDEEDL). Positions 550–607 (LLSNTKSKLLKLTSSSIDPGLNIKQLGGLYINFNVDKLQPHKETLTQIKEKKKNELLQ) are tdBR region; mediates interaction with DNTT. Glycyl lysine isopeptide (Lys-Gly) (interchain with G-Cter in SUMO2) cross-links involve residues K560, K586, and K608. T612 carries the post-translational modification Phosphothreonine. Residues 621-647 (VPPYSESKHRLQKQRRKERQKTAGNGW) form a disordered region. K628 participates in a covalent cross-link: Glycyl lysine isopeptide (Lys-Gly) (interchain with G-Cter in SUMO2). Over residues 630-639 (RLQKQRRKER) the composition is skewed to basic residues. Glycyl lysine isopeptide (Lys-Gly) (interchain with G-Cter in SUMO2) cross-links involve residues K651, K660, K688, and K733.

In terms of assembly, forms a ternary complex with DNTT and core histone; interaction with PCNA releases DNTT and H2A/H2B histones from this ternary complex. Interacts with ESR1, ESR2, PPARG and RXRA. Part of the small subunit (SSU) processome, composed of more than 70 proteins and the RNA chaperone small nucleolar RNA (snoRNA) U3.

Its subcellular location is the nucleus. The protein resides in the nucleolus. Regulates the transcriptional activity of DNTT and ESR1. May function as a chromatin remodeling protein. Part of the small subunit (SSU) processome, first precursor of the small eukaryotic ribosomal subunit. During the assembly of the SSU processome in the nucleolus, many ribosome biogenesis factors, an RNA chaperone and ribosomal proteins associate with the nascent pre-rRNA and work in concert to generate RNA folding, modifications, rearrangements and cleavage as well as targeted degradation of pre-ribosomal RNA by the RNA exosome. In Mus musculus (Mouse), this protein is Deoxynucleotidyltransferase terminal-interacting protein 2 (Dnttip2).